A 121-amino-acid polypeptide reads, in one-letter code: U15-barytoxin-Tl1a (121 aa).

Positions 1 to 17 (MKLSVIVLVASFGFAVA) are cleaved as a signal peptide. 4 disulfides stabilise this stretch: C56–C74, C67–C80, C71–C119, and C73–C90.

The protein belongs to the neurotoxin 03 (Tx2) family. 03 subfamily. In terms of tissue distribution, expressed by the venom gland.

It is found in the secreted. Functionally, ion channel inhibitor. The protein is U15-barytoxin-Tl1a of Trittame loki (Brush-footed trapdoor spider).